We begin with the raw amino-acid sequence, 169 residues long: Putative phosphoesterase SAR0985 (169 aa).

His-34 (proton donor) is an active-site residue. 2 short sequence motifs (HXTX) span residues 34 to 37 (HVTI) and 115 to 118 (HFTI). The active-site Proton acceptor is the His-115.

Belongs to the 2H phosphoesterase superfamily. YjcG family.

This Staphylococcus aureus (strain MRSA252) protein is Putative phosphoesterase SAR0985.